A 554-amino-acid chain; its full sequence is Potassium-transporting ATPase potassium-binding subunit (554 aa).

The next 12 membrane-spanning stretches (helical) occupy residues 1-21 (MSSQ…LALA), 59-79 (WPAY…FLYL), 131-151 (GLAV…VALV), 174-194 (VRIL…AGAI), 246-266 (PNPL…FALT), 279-299 (GYAI…LMMW), 323-343 (FGIA…TGAV), 352-372 (GFGG…PGGV), 375-395 (GLYG…LMVG), 412-432 (FAAC…AVAM), 481-501 (IGIA…ALAG), and 525-545 (GLLV…ALAL).

This sequence belongs to the KdpA family. As to quaternary structure, the system is composed of three essential subunits: KdpA, KdpB and KdpC.

Its subcellular location is the cell membrane. In terms of biological role, part of the high-affinity ATP-driven potassium transport (or Kdp) system, which catalyzes the hydrolysis of ATP coupled with the electrogenic transport of potassium into the cytoplasm. This subunit binds the extracellular potassium ions and delivers the ions to the membrane domain of KdpB through an intramembrane tunnel. This is Potassium-transporting ATPase potassium-binding subunit from Streptomyces griseus subsp. griseus (strain JCM 4626 / CBS 651.72 / NBRC 13350 / KCC S-0626 / ISP 5235).